Here is a 252-residue protein sequence, read N- to C-terminus: 3-deoxy-manno-octulosonate cytidylyltransferase (252 aa).

It belongs to the KdsB family.

The protein localises to the cytoplasm. It catalyses the reaction 3-deoxy-alpha-D-manno-oct-2-ulosonate + CTP = CMP-3-deoxy-beta-D-manno-octulosonate + diphosphate. The protein operates within nucleotide-sugar biosynthesis; CMP-3-deoxy-D-manno-octulosonate biosynthesis; CMP-3-deoxy-D-manno-octulosonate from 3-deoxy-D-manno-octulosonate and CTP: step 1/1. It participates in bacterial outer membrane biogenesis; lipopolysaccharide biosynthesis. Functionally, activates KDO (a required 8-carbon sugar) for incorporation into bacterial lipopolysaccharide in Gram-negative bacteria. The chain is 3-deoxy-manno-octulosonate cytidylyltransferase from Solibacter usitatus (strain Ellin6076).